An 833-amino-acid chain; its full sequence is Leucine--tRNA ligase (833 aa).

The 'HIGH' region motif lies at 41–52 (PYPSGAGLHVGH). A 'KMSKS' region motif is present at residues 610-614 (KMSKS). Lysine 613 is an ATP binding site.

The protein belongs to the class-I aminoacyl-tRNA synthetase family.

The protein resides in the cytoplasm. It catalyses the reaction tRNA(Leu) + L-leucine + ATP = L-leucyl-tRNA(Leu) + AMP + diphosphate. The chain is Leucine--tRNA ligase from Streptococcus pyogenes serotype M18 (strain MGAS8232).